An 85-amino-acid polypeptide reads, in one-letter code: CRISPR-associated endoribonuclease Cas2 2 (85 aa).

Residue D8 participates in Mg(2+) binding.

Belongs to the CRISPR-associated endoribonuclease Cas2 protein family. Homodimer, forms a heterotetramer with a Cas1 homodimer. Mg(2+) is required as a cofactor.

Functionally, CRISPR (clustered regularly interspaced short palindromic repeat), is an adaptive immune system that provides protection against mobile genetic elements (viruses, transposable elements and conjugative plasmids). CRISPR clusters contain sequences complementary to antecedent mobile elements and target invading nucleic acids. CRISPR clusters are transcribed and processed into CRISPR RNA (crRNA). Functions as a ssRNA-specific endoribonuclease. Involved in the integration of spacer DNA into the CRISPR cassette. This chain is CRISPR-associated endoribonuclease Cas2 2, found in Chloroflexus aurantiacus (strain ATCC 29366 / DSM 635 / J-10-fl).